The primary structure comprises 942 residues: Sucrose synthase 6 (942 aa).

The interval 281 to 759 is GT-B glycosyltransferase; the sequence is TVFNVVIFSV…GLKRIYECYT (479 aa). The disordered stretch occupies residues 830–862; the sequence is TTNLGAGSKQKEVTETEKTKQKSKDGQEQHDVK. Positions 838-862 are enriched in basic and acidic residues; the sequence is KQKEVTETEKTKQKSKDGQEQHDVK.

The protein belongs to the glycosyltransferase 1 family. Plant sucrose synthase subfamily. As to expression, detected in the whole plant but more precisely confined to the vasculature in cotyledons, leaves, petals, anthers and roots.

The protein resides in the secreted. Its subcellular location is the cell wall. It carries out the reaction an NDP-alpha-D-glucose + D-fructose = a ribonucleoside 5'-diphosphate + sucrose + H(+). Functionally, sucrose-cleaving enzyme that provides UDP-glucose and fructose for various metabolic pathways. Functions in callose synthesis at the site of phloem sieve elements. This is Sucrose synthase 6 (SUS6) from Arabidopsis thaliana (Mouse-ear cress).